A 350-amino-acid chain; its full sequence is RNA 3'-terminal phosphate cyclase (350 aa).

Residues Gln107 and 290–294 (FLGDQ) contribute to the ATP site. The active-site Tele-AMP-histidine intermediate is the His316.

The protein belongs to the RNA 3'-terminal cyclase family. Type 1 subfamily.

It localises to the cytoplasm. It catalyses the reaction a 3'-end 3'-phospho-ribonucleotide-RNA + ATP = a 3'-end 2',3'-cyclophospho-ribonucleotide-RNA + AMP + diphosphate. Its function is as follows. Catalyzes the conversion of 3'-phosphate to a 2',3'-cyclic phosphodiester at the end of RNA. The mechanism of action of the enzyme occurs in 3 steps: (A) adenylation of the enzyme by ATP; (B) transfer of adenylate to an RNA-N3'P to produce RNA-N3'PP5'A; (C) and attack of the adjacent 2'-hydroxyl on the 3'-phosphorus in the diester linkage to produce the cyclic end product. The biological role of this enzyme is unknown but it is likely to function in some aspects of cellular RNA processing. The protein is RNA 3'-terminal phosphate cyclase of Gloeothece citriformis (strain PCC 7424) (Cyanothece sp. (strain PCC 7424)).